Consider the following 148-residue polypeptide: Large ribosomal subunit protein bL9 (148 aa).

The protein belongs to the bacterial ribosomal protein bL9 family.

Its function is as follows. Binds to the 23S rRNA. This is Large ribosomal subunit protein bL9 from Streptomyces griseus subsp. griseus (strain JCM 4626 / CBS 651.72 / NBRC 13350 / KCC S-0626 / ISP 5235).